A 1043-amino-acid chain; its full sequence is Unconventional myosin-Ia (1043 aa).

Positions 8–694 (VGVEDLVLLE…TLFYLEEQRR (687 aa)) constitute a Myosin motor domain. 101–108 (GESGAGKT) serves as a coordination point for ATP. The actin-binding stretch occupies residues 571–593 (VTTLMKNLYSKNPNYIRCIKPNE). IQ domains follow at residues 697–719 (LQQLATLIQKTYRGWRCRTHYQL), 720–742 (MRKSQIVISSWFRGNMQKKHYRK), and 743–772 (MKASALLIQAFVRGWKARKNYRKYFRSGAA). The 185-residue stretch at 858–1042 (KASYPQSVPI…KGSRCLEVTV (185 aa)) folds into the TH1 domain.

It belongs to the TRAFAC class myosin-kinesin ATPase superfamily. Myosin family. Post-translationally, phosphorylated by ALPK1.

Its function is as follows. Involved in directing the movement of organelles along actin filaments. This is Unconventional myosin-Ia (MYO1A) from Bos taurus (Bovine).